Reading from the N-terminus, the 126-residue chain is MADLAQLEEQIVGLSLLDAAELVKKLESRLGVSAAAAAPVMVAGGGGAAAAAPVEEKTEFTVVLTAAGANKINVIKAVREVTSLGLKEAKDLVDGAPKTVKEGVSKDEAATIQKKFQEAGATVEVK.

It belongs to the bacterial ribosomal protein bL12 family. Homodimer. Part of the ribosomal stalk of the 50S ribosomal subunit. Forms a multimeric L10(L12)X complex, where L10 forms an elongated spine to which 2 to 4 L12 dimers bind in a sequential fashion. Binds GTP-bound translation factors.

Functionally, forms part of the ribosomal stalk which helps the ribosome interact with GTP-bound translation factors. Is thus essential for accurate translation. This is Large ribosomal subunit protein bL12 from Koribacter versatilis (strain Ellin345).